Reading from the N-terminus, the 1704-residue chain is Phospholipid-transporting ATPase ABCA3 (1704 aa).

N14 is a glycosylation site (N-linked (GlcNAc...) asparagine). The helical transmembrane segment at 22 to 42 threads the bilayer; it reads VLVTVLELFLPLLFSGILIWL. 4 N-linked (GlcNAc...) asparagine glycosylation sites follow: N53, N124, N140, and N228. 6 consecutive transmembrane segments (helical) span residues 261 to 283, 307 to 327, 344 to 364, 373 to 393, 405 to 425, and 447 to 467; these read YQLP…RAVV, AWFL…TLLF, SLVL…SFMV, IAAA…FFVA, LLSC…IGKF, and FCFG…GLVT. Residues 530 to 763 form the ABC transporter 1 domain; it reads IKIKHLSKVF…YGAGYHMTLV (234 aa). Residue 566–573 coordinates ATP; it reads GHNGAGKT. N-linked (GlcNAc...) asparagine glycosylation occurs at N620. Helical transmembrane passes span 925–945, 1100–1120, 1144–1164, 1183–1203, 1213–1233, 1245–1265, and 1310–1330; these read MVAA…LAIH, IALN…ILAV, SALL…LVVF, LLLM…SFFF, LTIF…IMRI, LDHV…SNFY, and MAAS…NLLW. N1350 carries N-linked (GlcNAc...) asparagine glycosylation. The 234-residue stretch at 1381 to 1614 folds into the ABC transporter 2 domain; it reads LIINELSKVY…FGSGYSLQAK (234 aa). 1416–1423 lines the ATP pocket; the sequence is GFNGAGKT.

The protein belongs to the ABC transporter superfamily. ABCA family. In terms of assembly, homooligomer; disulfide-linked. Post-translationally, N-glycosylated. Localization at intracellular vesicles is accompanied by processing of oligosaccharide from high mannose type to complex type. N-linked glycosylation at Asn-124 and Asn-140 is required for stability and efficient anterograde trafficking and prevents from proteasomal degradation. Proteolytically cleaved by CTSL and to a lower extent by CTSB within multivesicular bodies (MVB) and lamellar bodies (LB) leading to a mature form of 150 kDa. As to expression, highly expressed in the lung and moderately expressed in the kidney, adipose, macrophage, and spleen.

It localises to the endosome. Its subcellular location is the multivesicular body membrane. It is found in the cytoplasmic vesicle membrane. The protein localises to the late endosome membrane. The protein resides in the lysosome membrane. It carries out the reaction a 1,2-diacyl-sn-glycero-3-phospho-(1'-sn-glycerol)(in) + ATP + H2O = a 1,2-diacyl-sn-glycero-3-phospho-(1'-sn-glycerol)(out) + ADP + phosphate + H(+). The enzyme catalyses a 1,2-diacyl-sn-glycero-3-phosphocholine(in) + ATP + H2O = a 1,2-diacyl-sn-glycero-3-phosphocholine(out) + ADP + phosphate + H(+). It catalyses the reaction ATP + H2O + phospholipidSide 1 = ADP + phosphate + phospholipidSide 2.. The catalysed reaction is ATP + H2O + xenobioticSide 1 = ADP + phosphate + xenobioticSide 2.. It carries out the reaction 1,2-dihexadecanoyl-sn-glycero-3-phosphocholine(in) + ATP + H2O = 1,2-dihexadecanoyl-sn-glycero-3-phosphocholine(out) + ADP + phosphate + H(+). The enzyme catalyses cholesterol(in) + ATP + H2O = cholesterol(out) + ADP + phosphate + H(+). Its function is as follows. Catalyzes the ATP-dependent transport of phospholipids such as phosphatidylcholine and phosphoglycerol from the cytoplasm into the lumen side of lamellar bodies, in turn participates in the lamellar bodies biogenesis and homeostasis of pulmonary surfactant. Transports preferentially phosphatidylcholine containing short acyl chains. In addition plays a role as an efflux transporter of miltefosine across macrophage membranes and free cholesterol (FC) through intralumenal vesicles by removing FC from the cell as a component of surfactant and protects cells from free cholesterol toxicity. This chain is Phospholipid-transporting ATPase ABCA3 (Abca3), found in Mus musculus (Mouse).